Here is a 137-residue protein sequence, read N- to C-terminus: Peptide methionine sulfoxide reductase MsrB (137 aa).

One can recognise a MsrB domain in the interval 7–129; that stretch reads PDHPATELNE…NSASLSFTDG (123 aa). Residues Cys46, Cys49, Cys95, and Cys98 each coordinate Zn(2+). Cys118 serves as the catalytic Nucleophile.

This sequence belongs to the MsrB Met sulfoxide reductase family. Zn(2+) is required as a cofactor.

The enzyme catalyses L-methionyl-[protein] + [thioredoxin]-disulfide + H2O = L-methionyl-(R)-S-oxide-[protein] + [thioredoxin]-dithiol. This Serratia proteamaculans (strain 568) protein is Peptide methionine sulfoxide reductase MsrB.